Here is a 286-residue protein sequence, read N- to C-terminus: Phycobilisome 32.1 kDa linker polypeptide, phycocyanin-associated, rod (286 aa).

The region spanning 2 to 180 is the PBS-linker domain; that stretch reads AITAAASRLG…LYRGYANSDR (179 aa). Residues 234–286 form the CpcD-like domain; sequence DRVYRIEVTGVRSPGYPSVRRSSYAIIVPYERLSEKIQQIHKLGGKIVSITSA.

The protein belongs to the phycobilisome linker protein family.

It localises to the cellular thylakoid membrane. Its function is as follows. Rod linker protein, associated with phycocyanin. Linker polypeptides determine the state of aggregation and the location of the disk-shaped phycobiliprotein units within the phycobilisome and modulate their spectroscopic properties in order to mediate a directed and optimal energy transfer. The polypeptide is Phycobilisome 32.1 kDa linker polypeptide, phycocyanin-associated, rod (cpcC) (Mastigocladus laminosus (Fischerella sp.)).